A 423-amino-acid polypeptide reads, in one-letter code: Polyglutamylase complex subunit TTLL1 (423 aa).

Positions 1–367 (MAGKVKWVTD…NGEIPDCKWN (367 aa)) constitute a TTL domain. ATP is bound by residues K138, 144–145 (QG), 181–184 (SLYI), and 194–196 (KFD). Q144 contributes to the a protein binding site. R220 serves as a coordination point for L-glutamate. 241 to 242 (TN) lines the ATP pocket. K259 contributes to the L-glutamate binding site. Positions 313, 326, and 328 each coordinate Mg(2+). Position 344 (K344) interacts with L-glutamate. The segment at 391–423 (GAERELRSRPGQSLGPKGSRLRDAGRTVLTTWK) is disordered.

It belongs to the tubulin polyglutamylase family. In terms of assembly, part of the neuronal tubulin polyglutamylase complex which contains TPGS1, TPGS2, TTLL1, LRRC49 and NICN1. Interacts with PCM1, CSTPP1 and LRRC49. Requires Mg(2+) as cofactor.

It is found in the cytoplasm. The protein localises to the cytoskeleton. Its subcellular location is the cilium basal body. The protein resides in the cilium axoneme. It localises to the cell projection. It is found in the cilium. The protein localises to the flagellum. The enzyme catalyses (L-glutamyl)(n)-gamma-L-glutamyl-L-glutamyl-[protein] + L-glutamate + ATP = (L-glutamyl)(n+1)-gamma-L-glutamyl-L-glutamyl-[protein] + ADP + phosphate + H(+). Its function is as follows. Catalytic subunit of a polyglutamylase complex which modifies tubulin, generating side chains of glutamate on the gamma-carboxyl group of specific glutamate residues within the C-terminal tail of tubulin. Probably involved in the side-chain elongation step of the polyglutamylation reaction rather than the initiation step. Modifies both alpha- and beta-tubulins with a preference for the alpha-tail. Unlike most polyglutamylases of the tubulin--tyrosine ligase family, only displays a catalytic activity when in complex with other proteins as it is most likely lacking domains important for autonomous activity. Part of the neuronal tubulin polyglutamylase complex. Mediates cilia and flagella polyglutamylation which is essential for their biogenesis and motility. Involved in respiratory motile cilia function through the regulation of beating asymmetry. Essential for sperm flagella biogenesis, motility and male fertility. Involved in KLF4 glutamylation which impedes its ubiquitination, thereby leading to somatic cell reprogramming, pluripotency maintenance and embryogenesis. The polypeptide is Polyglutamylase complex subunit TTLL1 (TTLL1) (Bos taurus (Bovine)).